We begin with the raw amino-acid sequence, 229 residues long: Putative ABC transporter permease protein ORF1 (229 aa).

The region spanning 23 to 214 is the ABC transmembrane type-1 domain; sequence ALNSLLVALA…LPSLAFFALV (192 aa). The next 5 membrane-spanning stretches (helical) occupy residues 27–47, 62–82, 91–111, 150–170, and 194–214; these read LLVALATAAVTVLIATPMAYV, WVVVSQAFPFVLLIIPLFLVL, LTGLVLVYVVWSLPFALWMLA, ATALFAFVTAWNEFFFALVLL, and SPAGAAAFLATLPSLAFFALV.

The protein belongs to the binding-protein-dependent transport system permease family. MalFG subfamily.

Its subcellular location is the cell membrane. Its function is as follows. May participate in oleandomycin secretion during antibiotic production. This Streptomyces antibioticus protein is Putative ABC transporter permease protein ORF1.